A 201-amino-acid polypeptide reads, in one-letter code: Holliday junction branch migration complex subunit RuvA (201 aa).

The tract at residues 1-63 (MIASVRGEVL…EDSMTLYGFA (63 aa)) is domain I. A domain II region spans residues 64–142 (DTEARDLFGL…LVPVQAGPPG (79 aa)). A flexible linker region spans residues 143-153 (STPAVAATPVR). The tract at residues 153-201 (REQVVEALTGLGFPLKQAEQALDTVLAEQPAADTSTALRAALSLLGKNR) is domain III.

Belongs to the RuvA family. In terms of assembly, homotetramer. Forms an RuvA(8)-RuvB(12)-Holliday junction (HJ) complex. HJ DNA is sandwiched between 2 RuvA tetramers; dsDNA enters through RuvA and exits via RuvB. An RuvB hexamer assembles on each DNA strand where it exits the tetramer. Each RuvB hexamer is contacted by two RuvA subunits (via domain III) on 2 adjacent RuvB subunits; this complex drives branch migration. In the full resolvosome a probable DNA-RuvA(4)-RuvB(12)-RuvC(2) complex forms which resolves the HJ.

It localises to the cytoplasm. The RuvA-RuvB-RuvC complex processes Holliday junction (HJ) DNA during genetic recombination and DNA repair, while the RuvA-RuvB complex plays an important role in the rescue of blocked DNA replication forks via replication fork reversal (RFR). RuvA specifically binds to HJ cruciform DNA, conferring on it an open structure. The RuvB hexamer acts as an ATP-dependent pump, pulling dsDNA into and through the RuvAB complex. HJ branch migration allows RuvC to scan DNA until it finds its consensus sequence, where it cleaves and resolves the cruciform DNA. In Nocardia farcinica (strain IFM 10152), this protein is Holliday junction branch migration complex subunit RuvA.